The sequence spans 1420 residues: ABC transporter G family member 32 (1420 aa).

In terms of domain architecture, ABC transporter 1 spans 135–408; sequence LRNIHVIGGK…FSSLGFTCPD (274 aa). Residue 168-175 participates in ATP binding; the sequence is GPPSSGKT. One can recognise an ABC transmembrane type-2 1 domain in the interval 486-699; the sequence is ELLKINFAWQ…AQNAASVNEF (214 aa). 7 helical membrane passes run 504 to 524, 544 to 564, 585 to 605, 623 to 643, 648 to 668, 674 to 694, and 735 to 755; these read FIYVFKFVQLLLVALITMTVF, LYFSMVIILFNGFTEVPMLVA, LPSWLLSIPTSIIESATWVAV, FLLYFSLHQMSLGLFRVMGSL, IVANTFGSFAMLVVMTLGGFI, IPSWWIWGYWISPLMYAQNAA, and IGVAALLGYTVLFNILFTLFL. Residues 818 to 1070 enclose the ABC transporter 2 domain; the sequence is LSFSNINYYV…ELIKYFESIE (253 aa). 863-870 lines the ATP pocket; it reads GVSGAGKT. The region spanning 1143 to 1357 is the ABC transmembrane type-2 2 domain; the sequence is SQFVACLWKQ…TLYGLLVSQY (215 aa). Helical transmembrane passes span 1162-1182, 1202-1222, 1235-1255, 1277-1297, 1307-1327, 1334-1354, and 1392-1412; these read YTAVRFFYTVVISLMLGTICW, YAAVLFIGITNATAAQPVVSI, MYSALPFAFAQVFIEFPYVLA, FLWYLFFMYFSIMYFTFYGMM, VASIIAAPFYMLWNLFSGFMI, LWWRWYYWANPVAWTLYGLLV, and VSAIMVVAFCVFFSLVFAFAI.

This sequence belongs to the ABC transporter superfamily. ABCG family. PDR (TC 3.A.1.205) subfamily. Ubiquitous in aerial organs. Higher expression levels in young, expanding tissues than in older tissues. Detected in the epidermal layer.

It localises to the cell membrane. May be a general defense protein. Required for the formation of the cuticle layer of the cell wall. This Arabidopsis thaliana (Mouse-ear cress) protein is ABC transporter G family member 32.